A 214-amino-acid polypeptide reads, in one-letter code: Pyrophosphatase PpaX (214 aa).

Catalysis depends on D9, which acts as the Nucleophile.

Belongs to the HAD-like hydrolase superfamily. PpaX family. It depends on Mg(2+) as a cofactor.

The enzyme catalyses diphosphate + H2O = 2 phosphate + H(+). Its function is as follows. Hydrolyzes pyrophosphate formed during P-Ser-HPr dephosphorylation by HPrK/P. Might play a role in controlling the intracellular pyrophosphate pool. The polypeptide is Pyrophosphatase PpaX (Oceanobacillus iheyensis (strain DSM 14371 / CIP 107618 / JCM 11309 / KCTC 3954 / HTE831)).